We begin with the raw amino-acid sequence, 431 residues long: Trigger factor (431 aa).

The PPIase FKBP-type domain maps to 165–250 (GDTVVIDFDG…IHELKRKELP (86 aa)).

Belongs to the FKBP-type PPIase family. Tig subfamily.

It is found in the cytoplasm. It carries out the reaction [protein]-peptidylproline (omega=180) = [protein]-peptidylproline (omega=0). In terms of biological role, involved in protein export. Acts as a chaperone by maintaining the newly synthesized protein in an open conformation. Functions as a peptidyl-prolyl cis-trans isomerase. The chain is Trigger factor from Leuconostoc mesenteroides subsp. mesenteroides (strain ATCC 8293 / DSM 20343 / BCRC 11652 / CCM 1803 / JCM 6124 / NCDO 523 / NBRC 100496 / NCIMB 8023 / NCTC 12954 / NRRL B-1118 / 37Y).